The primary structure comprises 320 residues: Cytochrome f (320 aa).

A signal peptide spans 1–35 (MNFFTHKKNNFGSFVTIFSFLVALGVTNLTPAAEA). Residues Tyr-36, Cys-56, Cys-59, and His-60 each coordinate heme. Residues 286 to 306 (IQGLLVFFATVLFAQVLLVLK) traverse the membrane as a helical segment.

The protein belongs to the cytochrome f family. The 4 large subunits of the cytochrome b6-f complex are cytochrome b6, subunit IV (17 kDa polypeptide, petD), cytochrome f and the Rieske protein, while the 4 small subunits are PetG, PetL, PetM and PetN. The complex functions as a dimer. The cofactor is heme.

The protein resides in the plastid. It is found in the chloroplast thylakoid membrane. Component of the cytochrome b6-f complex, which mediates electron transfer between photosystem II (PSII) and photosystem I (PSI), cyclic electron flow around PSI, and state transitions. The chain is Cytochrome f from Tetradesmus obliquus (Green alga).